Reading from the N-terminus, the 492-residue chain is Protein GvpD2 (492 aa).

39 to 46 (GAPGTGKT) is a binding site for ATP. The span at 355 to 368 (RDHDDAVDPDRLPG) shows a compositional bias: basic and acidic residues. Residues 355 to 379 (RDHDDAVDPDRLPGHDTTPTEHGTL) form a disordered region.

Belongs to the gas vesicle GvpD family. As to quaternary structure, homodimer. Interacts with GvpE, also with GvpE from H.mediterranei.

It localises to the cytoplasm. Its function is as follows. Causes a decrease in the amount of GvpE protein. Gas vesicles are hollow, gas filled proteinaceous nanostructures found in several microbial planktonic microorganisms. They allow positioning of halobacteria at the optimal depth for growth in the poorly aerated, shallow brine pools of their habitat. Expression of 2 c-vac DNA fragments containing 2 divergently transcribed regions (gvpE-gvpF-gvpG-gvpH-gvpI-gvpJ-gvpK-gvpL-gvpM and gvpA-gvpC-gvpN-gvpO) allows H.volcanii to produce gas vesicles. The polypeptide is Protein GvpD2 (Halobacterium salinarum (strain ATCC 700922 / JCM 11081 / NRC-1) (Halobacterium halobium)).